A 226-amino-acid polypeptide reads, in one-letter code: ATP-dependent dethiobiotin synthetase BioD (226 aa).

12-17 (GVGKTV) contacts ATP. A Mg(2+)-binding site is contributed by T16. The active site involves K37. Residue T41 participates in substrate binding. ATP-binding positions include D49, 108 to 111 (EGAG), 169 to 170 (GS), and 197 to 199 (PAG). Positions 49 and 108 each coordinate Mg(2+).

The protein belongs to the dethiobiotin synthetase family. Homodimer. The cofactor is Mg(2+).

The protein resides in the cytoplasm. It catalyses the reaction (7R,8S)-7,8-diammoniononanoate + CO2 + ATP = (4R,5S)-dethiobiotin + ADP + phosphate + 3 H(+). The protein operates within cofactor biosynthesis; biotin biosynthesis; biotin from 7,8-diaminononanoate: step 1/2. Functionally, catalyzes a mechanistically unusual reaction, the ATP-dependent insertion of CO2 between the N7 and N8 nitrogen atoms of 7,8-diaminopelargonic acid (DAPA, also called 7,8-diammoniononanoate) to form a ureido ring. The sequence is that of ATP-dependent dethiobiotin synthetase BioD from Mycobacterium tuberculosis (strain ATCC 25177 / H37Ra).